The chain runs to 151 residues: Putative pre-16S rRNA nuclease (151 aa).

It belongs to the YqgF nuclease family.

It is found in the cytoplasm. Functionally, could be a nuclease involved in processing of the 5'-end of pre-16S rRNA. In Bifidobacterium adolescentis (strain ATCC 15703 / DSM 20083 / NCTC 11814 / E194a), this protein is Putative pre-16S rRNA nuclease.